The chain runs to 1198 residues: Structural polyprotein (1198 aa).

The interval 2–15 is interaction with host EXOC1; it reads TKKPGGPGKNRAIN. The hydrophobic; homodimerization of capsid protein C stretch occupies residues 37 to 72; that stretch reads LLDGRGPVRFVLALITFFKFTALAPTKALLGRWKAV. A propeptide spans 106-127 (ER anchor for the capsid protein C, removed in mature form by serine protease NS3); it reads GGNEGSIMWLASLAVVIACAGA. A helical transmembrane segment spans residues 110-130; the sequence is GSIMWLASLAVVIACAGAMKL. An N-linked (GlcNAc...) asparagine; by host glycan is attached at asparagine 142. The next 2 helical transmembrane spans lie at 254-274 and 280-294; these read WIIRNPGYAFLAAVLGWMLGS and VVFTILLLLVAPAYS. Cystine bridges form between cysteine 297–cysteine 324, cysteine 354–cysteine 410, cysteine 354–cysteine 415, cysteine 368–cysteine 399, cysteine 386–cysteine 410, and cysteine 386–cysteine 415. The tract at residues 392–405 is fusion peptide; the sequence is DRGWGNGCGLFGKG. An N-linked (GlcNAc...) asparagine; by host glycan is attached at asparagine 448. Disulfide bonds link cysteine 484–cysteine 581 and cysteine 598–cysteine 629. 2 helical membrane-spanning segments follow: residues 747–767 and 774–794; these read FGGMSWITQGLMGALLLWMGV and IALAFLATGGVLVFLATNVHA. Cystine bridges form between cysteine 798-cysteine 809, cysteine 849-cysteine 937, cysteine 973-cysteine 1017, cysteine 1074-cysteine 1123, cysteine 1085-cysteine 1106, and cysteine 1107-cysteine 1110. 2 N-linked (GlcNAc...) asparagine; by host glycosylation sites follow: asparagine 924 and asparagine 1001. The disordered stretch occupies residues 1151–1177; the sequence is MVDPFSAGPSGDVSGHPGSPSQEVDGQ.

As to quaternary structure, homodimer. Interacts (via N-terminus) with host EXOC1 (via C-terminus); this interaction results in EXOC1 degradation through the proteasome degradation pathway. Interacts with host CAPRIN1; this interaction is involved in the suppression of the integrated stress response. In terms of assembly, forms heterodimers with envelope protein E in the endoplasmic reticulum and Golgi. Homodimer; in the endoplasmic reticulum and Golgi. Interacts with protein prM. Interacts with non-structural protein 1. Genome polyprotein: Specific enzymatic cleavages in vivo yield mature proteins. Cleavages in the lumen of endoplasmic reticulum are performed by host signal peptidase, whereas cleavages in the cytoplasmic side are performed by serine protease NS3. Signal cleavage at the 2K-4B site requires a prior NS3 protease-mediated cleavage at the 4A-2K site. In terms of processing, cleaved in post-Golgi vesicles by a host furin, releasing the mature small envelope protein M, and peptide pr. This cleavage is incomplete as up to 30% of viral particles still carry uncleaved prM. Post-translationally, N-glycosylated.

Its subcellular location is the secreted. The protein resides in the virion membrane. The protein localises to the host endoplasmic reticulum membrane. Its function is as follows. Plays a role in virus budding by binding to the cell membrane and gathering the viral RNA into a nucleocapsid that forms the core of a mature virus particle. During virus entry, may induce genome penetration into the host cytoplasm after hemifusion induced by the surface proteins. Can migrate to the cell nucleus where it modulates host functions. Overcomes the anti-viral effects of host EXOC1 by sequestering and degrading the latter through the proteasome degradation pathway. Inhibits the integrated stress response (ISR) in the infected cell by binding to host CAPRIN1. Inhibits RNA silencing by interfering with host Dicer. Functionally, prevents premature fusion activity of envelope proteins in trans-Golgi by binding to envelope protein E at pH6.0. After virion release in extracellular space, gets dissociated from E dimers. In terms of biological role, acts as a chaperone for envelope protein E during intracellular virion assembly by masking and inactivating envelope protein E fusion peptide. prM is the only viral peptide matured by host furin in the trans-Golgi network probably to avoid catastrophic activation of the viral fusion activity in acidic Golgi compartment prior to virion release. prM-E cleavage is inefficient, and many virions are only partially matured. These uncleaved prM would play a role in immune evasion. Its function is as follows. May play a role in virus budding. Exerts cytotoxic effects by activating a mitochondrial apoptotic pathway through M ectodomain. May display a viroporin activity. Binds to host cell surface receptor and mediates fusion between viral and cellular membranes. Envelope protein is synthesized in the endoplasmic reticulum in the form of heterodimer with protein prM. They play a role in virion budding in the ER, and the newly formed immature particle is covered with 60 spikes composed of heterodimer between precursor prM and envelope protein E. The virion is transported to the Golgi apparatus where the low pH causes dissociation of PrM-E heterodimers and formation of E homodimers. prM-E cleavage is inefficient, and many virions are only partially matured. These uncleaved prM would play a role in immune evasion. Functionally, may play a role in neuroinvasiveness. In Ardeidae (herons), this protein is Structural polyprotein.